The following is a 528-amino-acid chain: Alpha-amylase (528 aa).

The signal sequence occupies residues 1-28 (MNKKWLNIPALIALLAAIAFGSVAPAEA). Asn168 and Asp228 together coordinate Ca(2+). Asp258 acts as the Nucleophile in catalysis. Residue His262 coordinates Ca(2+). The Proton donor role is filled by Glu286.

It belongs to the glycosyl hydrolase 13 family. Monomer. Ca(2+) is required as a cofactor.

It carries out the reaction Endohydrolysis of (1-&gt;4)-alpha-D-glucosidic linkages in polysaccharides containing three or more (1-&gt;4)-alpha-linked D-glucose units.. This Niallia circulans (Bacillus circulans) protein is Alpha-amylase.